We begin with the raw amino-acid sequence, 1413 residues long: Leucine-rich repeat receptor protein kinase MSL1 (1413 aa).

The first 23 residues, 1–23, serve as a signal peptide directing secretion; sequence MAPMLSIASRSPSPALIAPHASA. Residues N153 and N192 are each glycosylated (N-linked (GlcNAc...) asparagine). 29 LRR repeats span residues 185–209, 210–233, 235–257, 258–281, 282–304, 306–329, 330–353, 354–377, 379–401, 402–425, 427–449, 450–473, 475–497, 498–518, 519–542, 543–565, 567–589, 590–613, 615–636, 637–661, 662–685, 687–709, 710–733, 745–769, 771–793, 794–817, 818–841, 843–866, and 868–890; these read FQSLVRLNVSGCGFSGELPEAMVNL, QHLQHLDLSDNQLGGPLPASLFDL, MLKVMVLDNNMFSGQLSPAIAHL, QQLTVLSISTNSFSGGLPPELGSL, KNLEYLDIHTNAFSGSIPASFSN, SRLLYLDANNNNLTGSIFPGIRAL, VNLVKLDLSSNGLVGAIPKELCQL, KNLQSLILSDNELTGSIPEEIGNL, QLEVLNLLKCNLMDTVPLSIGNL, EILEGLYISFNSFSGELPASVGEL, NLRQLMAKSAGFTGSIPKELGNC, KKLTTLVLSGNNFTGTIPEELADL, AVVLFDVEGNRLSGHIPDWIQNW, SNVSSISLAQNMFDGPLPGLP, LHLVSFSAESNRLSGSIPAKICQG, TFLQILRLNDNNLTGSIDETFKG, KNLTELSLLDNHLHGEIPEYLAL, LPLVSLDLSHNNFTGMIPDRLWES, TILDISLSDNQLTGMITESIGK, LLSLQSLSIDRNYLQGPLPRSIGAL, RNLTALSLSGNMLSEDIPIQLFNC, NLVTLDLSCNNLTGHIPKAISHL, TKLNTLVLSRNRLSGAIPSELCVA, VQHIGLIDLSRNRLTGHIPRAINNC, ILVELHLQDNLLSGTIPVELAEL, RNITTIDLSSNALVGPVLPWPVPL, ASLQGLLLSNNRLSGSIPSGIGNI, PQITMLDLSGNALTGTLPLDLLCK, and SLNHLDVSDNNISGQIPFSCHED. N-linked (GlcNAc...) asparagine glycans are attached at residues N304 and N317. Residues N461, N496, and N499 are each glycosylated (N-linked (GlcNAc...) asparagine). 3 N-linked (GlcNAc...) asparagine glycosylation sites follow: N554, N568, and N601. 2 N-linked (GlcNAc...) asparagine glycosylation sites follow: N663 and N697. N768 carries an N-linked (GlcNAc...) asparagine glycan. The N-linked (GlcNAc...) asparagine glycan is linked to N795. N-linked (GlcNAc...) asparagine glycans are attached at residues N878, N901, N917, and N928. LRR repeat units lie at residues 918 to 942 and 944 to 966; these read FTKLTYLDLHNNSLTGRLPSAIARV and SLYYLDLSSNDFSGTIPCGICGM. N-linked (GlcNAc...) asparagine glycosylation occurs at N973. A helical transmembrane segment spans residues 1016–1036; that stretch reads TICCIATAIVIVLVVILVVYL. The Protein kinase domain occupies 1107 to 1401; the sequence is FDGMHVVGDG…IEAMEYGPLV (295 aa). Residues 1113-1121 and K1135 each bind ATP; that span reads VGDGGFGTV. The active-site Proton acceptor is D1234.

This sequence belongs to the protein kinase superfamily. Ser/Thr protein kinase family. As to expression, expressed in roots, leaves, shoots and spikelets.

It localises to the cell membrane. The catalysed reaction is L-seryl-[protein] + ATP = O-phospho-L-seryl-[protein] + ADP + H(+). It catalyses the reaction L-threonyl-[protein] + ATP = O-phospho-L-threonyl-[protein] + ADP + H(+). Its function is as follows. Receptor-like kinase that may play a role male and female sporogenesis. This is Leucine-rich repeat receptor protein kinase MSL1 from Oryza sativa subsp. japonica (Rice).